A 326-amino-acid chain; its full sequence is 4-hydroxy-3-methylbut-2-enyl diphosphate reductase (326 aa).

[4Fe-4S] cluster is bound at residue C22. (2E)-4-hydroxy-3-methylbut-2-enyl diphosphate-binding residues include H51 and H84. The dimethylallyl diphosphate site is built by H51 and H84. H51 and H84 together coordinate isopentenyl diphosphate. Residue C106 coordinates [4Fe-4S] cluster. H134 provides a ligand contact to (2E)-4-hydroxy-3-methylbut-2-enyl diphosphate. H134 is a binding site for dimethylallyl diphosphate. Residue H134 coordinates isopentenyl diphosphate. The active-site Proton donor is the E136. A (2E)-4-hydroxy-3-methylbut-2-enyl diphosphate-binding site is contributed by T174. Residue C204 coordinates [4Fe-4S] cluster. S232, S233, N234, and S276 together coordinate (2E)-4-hydroxy-3-methylbut-2-enyl diphosphate. Residues S232, S233, N234, and S276 each coordinate dimethylallyl diphosphate. Positions 232, 233, 234, and 276 each coordinate isopentenyl diphosphate.

It belongs to the IspH family. The cofactor is [4Fe-4S] cluster.

The enzyme catalyses isopentenyl diphosphate + 2 oxidized [2Fe-2S]-[ferredoxin] + H2O = (2E)-4-hydroxy-3-methylbut-2-enyl diphosphate + 2 reduced [2Fe-2S]-[ferredoxin] + 2 H(+). It carries out the reaction dimethylallyl diphosphate + 2 oxidized [2Fe-2S]-[ferredoxin] + H2O = (2E)-4-hydroxy-3-methylbut-2-enyl diphosphate + 2 reduced [2Fe-2S]-[ferredoxin] + 2 H(+). It participates in isoprenoid biosynthesis; dimethylallyl diphosphate biosynthesis; dimethylallyl diphosphate from (2E)-4-hydroxy-3-methylbutenyl diphosphate: step 1/1. It functions in the pathway isoprenoid biosynthesis; isopentenyl diphosphate biosynthesis via DXP pathway; isopentenyl diphosphate from 1-deoxy-D-xylulose 5-phosphate: step 6/6. Catalyzes the conversion of 1-hydroxy-2-methyl-2-(E)-butenyl 4-diphosphate (HMBPP) into a mixture of isopentenyl diphosphate (IPP) and dimethylallyl diphosphate (DMAPP). Acts in the terminal step of the DOXP/MEP pathway for isoprenoid precursor biosynthesis. In Bordetella parapertussis (strain 12822 / ATCC BAA-587 / NCTC 13253), this protein is 4-hydroxy-3-methylbut-2-enyl diphosphate reductase.